The chain runs to 148 residues: MQVILLDDVKALGKKGEVVNVSDGYARNFILPKKLGLEATPKNLNDLKLQKAAEAKLAQEILEQAQALAKEIESKSILLKIKSGEGGRTFGSVSTKEIAIALKEQLGHDIDKKKLVLNDPIKNMGTYTVPVKLHPKVTAELKVKVDSL.

The protein belongs to the bacterial ribosomal protein bL9 family.

Functionally, binds to the 23S rRNA. This is Large ribosomal subunit protein bL9 from Lachnoclostridium phytofermentans (strain ATCC 700394 / DSM 18823 / ISDg) (Clostridium phytofermentans).